The following is a 427-amino-acid chain: Tumor necrosis factor receptor superfamily member 16 (427 aa).

Positions 1–28 are cleaved as a signal peptide; that stretch reads MGAGATGRAMDGPRLLLLLLLGVSLGGA. At 29–250 the chain is on the extracellular side; sequence KEACPTGLYT…PVVTRGTTDN (222 aa). TNFR-Cys repeat units follow at residues 31 to 64, 66 to 107, 108 to 146, and 148 to 188; these read ACPTGLYTHSGECCKACNLGEGVAQPCGANQTVC, PCLD…DAVC, RCAYGYYQDETTGRCEACRVCEAGSGLVFSCQDKQNTVC, and ECPD…DAEC. Cystine bridges form between Cys32–Cys43, Cys44–Cys57, Cys47–Cys64, Cys67–Cys83, Cys86–Cys99, Cys89–Cys107, Cys109–Cys122, Cys125–Cys138, Cys128–Cys146, Cys149–Cys164, Cys167–Cys180, and Cys170–Cys188. Asn60 carries N-linked (GlcNAc...) asparagine glycosylation. The disordered stretch occupies residues 194–219; it reads RWITRSTPPEGSDSTAPSTQEPEAPP. Over residues 197–214 the composition is skewed to polar residues; the sequence is TRSTPPEGSDSTAPSTQE. A helical membrane pass occupies residues 251–272; the sequence is LIPVYCSILAAVVVGLVAYIAF. Over 273–427 the chain is Cytoplasmic; sequence KRWNSCKQNK…CSESTATSPV (155 aa). Polar residues-rich tracts occupy residues 281-291 and 305-326; these read NKQGANSRPVN and SGISVDSQSLHDQQPHTQTASG. The disordered stretch occupies residues 281-338; that stretch reads NKQGANSRPVNQTPPPEGEKLHSDSGISVDSQSLHDQQPHTQTASGQALKGDGGLYSS. Ser311 bears the Phosphoserine mark. The tract at residues 326-341 is mediates interaction with KIDINS220; it reads GQALKGDGGLYSSLPP. A Death domain is found at 344 to 421; the sequence is REEVEKLLNG…DLVESLCSES (78 aa).

In terms of assembly, homodimer; disulfide-linked. Heterodimer with SORCS2. The extracellular domains of the heterodimer bind NGF. The cytoplasmic region of the heterodimer binds TRIO. NGF binding mediates dissociation of TRIO from the receptor complex. Interacts with RTN4R. Interacts with TRAF2, TRAF4, TRAF6, PTPN13 and RANBP9. Interacts through TRAF6 with SQSTM1 which bridges NGFR to NTRK1. Interacts with BEX1. Interacts with BEX3. Interacts with KIDINS220 and NTRK1. Can form a ternary complex with NTRK1 and KIDINS220 and this complex is affected by the expression levels of KIDINS220. An increase in KIDINS220 expression leads to a decreased association of NGFR and NTRK1. Interacts with NTRK2; may regulate the ligand specificity of the NTRK2 receptor. Interacts (via death domain) with RAB31. Interacts with LINGO1. Interacts with NRADD. Interacts with MAGED1; the interaction antagonizes the association NGFR:NTRK1. Interacts (via death domain) with ARHGDIA and RIPK2. Interacts with BFAR. N- and O-glycosylated. In terms of processing, O-linked glycans consist of Gal(1-3)GalNAc core elongated by 1 or 2 NeuNAc. Post-translationally, phosphorylated on serine residues.

The protein resides in the cell membrane. It localises to the cytoplasm. The protein localises to the perikaryon. Its subcellular location is the cell projection. It is found in the growth cone. The protein resides in the dendritic spine. Its function is as follows. Low affinity receptor which can bind to NGF, BDNF, NTF3, and NTF4. Forms a heterodimeric receptor with SORCS2 that binds the precursor forms of NGF, BDNF and NTF3 with high affinity, and has much lower affinity for mature NGF and BDNF. Plays an important role in differentiation and survival of specific neuronal populations during development. Can mediate cell survival as well as cell death of neural cells. Plays a role in the inactivation of RHOA. Plays a role in the regulation of the translocation of GLUT4 to the cell surface in adipocytes and skeletal muscle cells in response to insulin, probably by regulating RAB31 activity, and thereby contributes to the regulation of insulin-dependent glucose uptake. Necessary for the circadian oscillation of the clock genes BMAL1, PER1, PER2 and NR1D1 in the suprachiasmatic nucleus (SCmgetaN) of the brain and in liver and of the genes involved in glucose and lipid metabolism in the liver. Together with BFAR negatively regulates NF-kappa-B and JNK-related signaling pathways. This chain is Tumor necrosis factor receptor superfamily member 16 (NGFR), found in Homo sapiens (Human).